Consider the following 277-residue polypeptide: Large ribosomal subunit protein uL2 (277 aa).

Residues 199–277 (DHMNTSIGKA…ILLSRHKRKK (79 aa)) are disordered. Positions 209 to 220 (GRNRWLGRKPHN) are enriched in basic residues.

This sequence belongs to the universal ribosomal protein uL2 family. Part of the 50S ribosomal subunit. Forms a bridge to the 30S subunit in the 70S ribosome.

One of the primary rRNA binding proteins. Required for association of the 30S and 50S subunits to form the 70S ribosome, for tRNA binding and peptide bond formation. It has been suggested to have peptidyltransferase activity; this is somewhat controversial. Makes several contacts with the 16S rRNA in the 70S ribosome. The protein is Large ribosomal subunit protein uL2 of Bradyrhizobium diazoefficiens (strain JCM 10833 / BCRC 13528 / IAM 13628 / NBRC 14792 / USDA 110).